Consider the following 108-residue polypeptide: Thiosulfate sulfurtransferase GlpE (108 aa).

The region spanning 18-106 (ENEGATLADI…WERSGLPIET (89 aa)) is the Rhodanese domain. Cys-66 acts as the Cysteine persulfide intermediate in catalysis.

The protein belongs to the GlpE family.

The protein localises to the cytoplasm. It catalyses the reaction thiosulfate + hydrogen cyanide = thiocyanate + sulfite + 2 H(+). The catalysed reaction is thiosulfate + [thioredoxin]-dithiol = [thioredoxin]-disulfide + hydrogen sulfide + sulfite + 2 H(+). Transferase that catalyzes the transfer of sulfur from thiosulfate to thiophilic acceptors such as cyanide or dithiols. May function in a CysM-independent thiosulfate assimilation pathway by catalyzing the conversion of thiosulfate to sulfite, which can then be used for L-cysteine biosynthesis. This Actinobacillus pleuropneumoniae serotype 7 (strain AP76) protein is Thiosulfate sulfurtransferase GlpE.